A 406-amino-acid chain; its full sequence is Cysteine desulfurase (406 aa).

At K226 the chain carries N6-(pyridoxal phosphate)lysine. C364 serves as the catalytic Cysteine persulfide intermediate.

Belongs to the class-V pyridoxal-phosphate-dependent aminotransferase family. Csd subfamily. In terms of assembly, homodimer. Interacts with SufE and the SufBCD complex composed of SufB, SufC and SufD. The interaction with SufE is required to mediate the direct transfer of the sulfur atom from the S-sulfanylcysteine. It depends on pyridoxal 5'-phosphate as a cofactor.

It localises to the cytoplasm. It carries out the reaction (sulfur carrier)-H + L-cysteine = (sulfur carrier)-SH + L-alanine. It catalyses the reaction L-selenocysteine + AH2 = hydrogenselenide + L-alanine + A + H(+). It functions in the pathway cofactor biosynthesis; iron-sulfur cluster biosynthesis. Its function is as follows. Cysteine desulfurases mobilize the sulfur from L-cysteine to yield L-alanine, an essential step in sulfur metabolism for biosynthesis of a variety of sulfur-containing biomolecules. Component of the suf operon, which is activated and required under specific conditions such as oxidative stress and iron limitation. Acts as a potent selenocysteine lyase in vitro, that mobilizes selenium from L-selenocysteine. Selenocysteine lyase activity is however unsure in vivo. This chain is Cysteine desulfurase, found in Shigella sonnei (strain Ss046).